We begin with the raw amino-acid sequence, 898 residues long: MRKGVLKDPEIAELFFKEDPEELFIDLHEIGHGSFGAVYFATNAHTNEVVAIKKMSYSGKQTHEKWQDILKEVRFLQQLKHPNTIEYKGCYLKEHTAWLVMEYCLGSASDLLEVHKKPLQEVEIAAITHGALQGLAYLHFHSLIHRDIKAGNILLTEPGQVKLADFGSASMASPANSFVGTPYWMAPEVILAMDEGQYDGKVDIWSLGITCIELAERKPPLFNMNAMSALYHIAQNDSPTLQSREWTDSFRRFVDYCLHKIPQERPAAAELLRHDFIRRERPPRVLIDLIQRTKDAVRELDNLQYRKMKKILFQETRNGPLNESQEEEEDSEQGSNLNREVDSLGSIHSIPSVSVSTGSRSSSVNSMQEVMDEGSPELVMMQEDEGTVNSSSSMVHKKDHVFVRDEAGHGDPRPEPRPTQSVQSRALHYRNRERFATIKSASLVTRQIHEHEQENELREQMSGYKRMRRQHQKQLIALENKLKAEMDEHRLKLQKEVETHANNSSIELEKLAKKQVATIEKEAKVAAADEKKFQQQILAQQKKDLTTFLESQKKQYKICKEKIKEEMNEDHSTPKKEKQERISKHKENLQHTQAEEEAHLLTQQRLYYDRNCRCFKRKIMTKRHEVEQQNIREELNKKRTQKEMEHAMLIRHDESTRELEYRQLHTLQKLRMDLIRLQHQTELENQLEYNKRRERELHRKHVMELRQQPKNLKAMEMQIKKQFQDTCKVQTKQYKALKNHQLEVTPKNEHKAILKTLKEEQTRKLAILAEQYEQSINEMMASQALRLDEAQEAECQALRLQLQQEMELLNAYQSKIKMQTEAQHERELQKLEQRVSLRRAHLEQKIEEELAALQKERSERIKTLLERQERETETFDMESLRMGFGNLVTLDFPKEDYR.

The Protein kinase domain occupies 24–277; the sequence is FIDLHEIGHG…AAELLRHDFI (254 aa). Residues 30-38 and lysine 53 each bind ATP; that span reads IGHGSFGAV. Aspartate 147 acts as the Proton acceptor in catalysis. Disordered stretches follow at residues 316–372 and 405–424; these read TRNG…EVMD and DEAGHGDPRPEPRPTQSVQS. Residues serine 324, serine 331, serine 343, serine 346, and serine 349 each carry the phosphoserine modification. The segment covering 349–366 has biased composition (low complexity); it reads SIPSVSVSTGSRSSSVNS. Threonine 357 bears the Phosphothreonine mark. Phosphoserine is present on serine 359. Basic and acidic residues predominate over residues 405–416; that stretch reads DEAGHGDPRPEP. Serine 442 bears the Phosphoserine mark. 3 coiled-coil regions span residues 452-502, 548-649, and 753-871; these read EQEN…THAN, FLES…HAML, and ILKT…QERE. The disordered stretch occupies residues 565–596; it reads EEMNEDHSTPKKEKQERISKHKENLQHTQAEE. Residue lysine 830 is modified to N6-acetyllysine.

The protein belongs to the protein kinase superfamily. STE Ser/Thr protein kinase family. STE20 subfamily. Self-associates. Interacts with ERN1 and TRAF2. Interaction with TRAF2 is facilitated under ER stress conditions, such as treatment with tunicamycin, and may promote TRAF2 phosphorylation. Interacts (via N-terminus) with STK25; the interaction promotes STK25 abundance at the level of protein expression and/or stability. Post-translationally, autophosphorylated. Phosphorylation at Ser-324 by ATM following DNA damage is required for activation of the p38/MAPK14 stress-activated MAPK cascade. Phosphorylated at Ser-324 and on Tyr residues during T cell activation. Phosphorylated by LRRK2. Ubiquitously expressed, with a higher expression in the retina.

It is found in the cytoplasm. It localises to the cell membrane. The protein localises to the membrane raft. Its subcellular location is the lipid droplet. The catalysed reaction is L-seryl-[protein] + ATP = O-phospho-L-seryl-[protein] + ADP + H(+). It carries out the reaction L-threonyl-[protein] + ATP = O-phospho-L-threonyl-[protein] + ADP + H(+). Serine/threonine-protein kinase that acts as a regulator of the p38/MAPK14 stress-activated MAPK cascade and of the MAPK8/JNK cascade. In response to DNA damage, involved in the G2/M transition DNA damage checkpoint by activating the p38/MAPK14 stress-activated MAPK cascade, probably by mediating phosphorylation of upstream MAP2K3 and MAP2K6 kinases. Inhibits basal activity of the MAPK8/JNK cascade and diminishes its activation in response to epidermal growth factor (EGF). Positively regulates canonical T cell receptor (TCR) signaling by preventing early PTPN6/SHP1-mediated inactivation of LCK, ensuring sustained TCR signaling that is required for optimal activation and differentiation of T cells. Phosphorylates PTPN6/SHP1 on 'Thr-396', leading to its polyubiquitination and subsequent proteasomal degradation. Required for cell surface expression of metalloprotease ADAM10 on type 1 transitional B cells which is necessary for their NOTCH-mediated development into marginal zone B cells. Also required for the NOTCH-mediated terminal differentiation of splenic conventional type 2 dendritic cells. Positively regulates osteoblast differentiation by acting as an upstream activator of the JNK pathway. Promotes JNK signaling in hepatocytes and positively regulates hepatocyte lipid storage by inhibiting beta-oxidation and triacylglycerol secretion while enhancing lipid synthesis. Restricts age-associated inflammation by negatively regulating differentiation of macrophages and their production of pro-inflammatory cytokines. Plays a role in negatively regulating the abundance of regulatory T cells in white adipose tissue. The chain is Serine/threonine-protein kinase TAO3 (Taok3) from Rattus norvegicus (Rat).